A 121-amino-acid chain; its full sequence is Large ribosomal subunit protein uL14c (121 aa).

It belongs to the universal ribosomal protein uL14 family. In terms of assembly, part of the 50S ribosomal subunit.

Its subcellular location is the plastid. The protein localises to the chloroplast. Functionally, binds to 23S rRNA. This chain is Large ribosomal subunit protein uL14c, found in Pelargonium hortorum (Common geranium).